A 226-amino-acid polypeptide reads, in one-letter code: ATP synthase F(0) complex subunit a (226 aa).

6 helical membrane passes run 12 to 32 (PTMM…ILFP), 68 to 88 (WALM…LGLL), 97 to 117 (QLSM…ITGF), 138 to 158 (IPML…ALAV), 164 to 184 (ITAG…LMNI), and 200 to 222 (TILE…SLYL).

Belongs to the ATPase A chain family. In terms of assembly, component of the ATP synthase complex composed at least of ATP5F1A/subunit alpha, ATP5F1B/subunit beta, ATP5MC1/subunit c (homooctomer), MT-ATP6/subunit a, MT-ATP8/subunit 8, ATP5ME/subunit e, ATP5MF/subunit f, ATP5MG/subunit g, ATP5MK/subunit k, ATP5MJ/subunit j, ATP5F1C/subunit gamma, ATP5F1D/subunit delta, ATP5F1E/subunit epsilon, ATP5PF/subunit F6, ATP5PB/subunit b, ATP5PD/subunit d, ATP5PO/subunit OSCP. ATP synthase complex consists of a soluble F(1) head domain (subunits alpha(3) and beta(3)) - the catalytic core - and a membrane F(0) domain - the membrane proton channel (subunits c, a, 8, e, f, g, k and j). These two domains are linked by a central stalk (subunits gamma, delta, and epsilon) rotating inside the F1 region and a stationary peripheral stalk (subunits F6, b, d, and OSCP). Interacts with DNAJC30; interaction is direct.

It is found in the mitochondrion inner membrane. The enzyme catalyses H(+)(in) = H(+)(out). In terms of biological role, subunit a, of the mitochondrial membrane ATP synthase complex (F(1)F(0) ATP synthase or Complex V) that produces ATP from ADP in the presence of a proton gradient across the membrane which is generated by electron transport complexes of the respiratory chain. ATP synthase complex consist of a soluble F(1) head domain - the catalytic core - and a membrane F(1) domain - the membrane proton channel. These two domains are linked by a central stalk rotating inside the F(1) region and a stationary peripheral stalk. During catalysis, ATP synthesis in the catalytic domain of F(1) is coupled via a rotary mechanism of the central stalk subunits to proton translocation. With the subunit c (ATP5MC1), forms the proton-conducting channel in the F(0) domain, that contains two crucial half-channels (inlet and outlet) that facilitate proton movement from the mitochondrial intermembrane space (IMS) into the matrix. Protons are taken up via the inlet half-channel and released through the outlet half-channel, following a Grotthuss mechanism. The chain is ATP synthase F(0) complex subunit a from Felis catus (Cat).